Consider the following 132-residue polypeptide: Small ribosomal subunit protein uS11 (132 aa).

This sequence belongs to the universal ribosomal protein uS11 family. In terms of assembly, part of the 30S ribosomal subunit.

In terms of biological role, located on the platform of the 30S subunit. The sequence is that of Small ribosomal subunit protein uS11 (rps11) from Korarchaeum cryptofilum (strain OPF8).